A 460-amino-acid chain; its full sequence is Bifunctional protein GlmU (460 aa).

Residues 1–229 (MSHYAIILAA…FEESLGVNDR (229 aa)) form a pyrophosphorylase region. UDP-N-acetyl-alpha-D-glucosamine contacts are provided by residues 8-11 (LAAG), K22, Q72, and 77-78 (GT). D102 is a binding site for Mg(2+). Positions 139, 154, 169, and 227 each coordinate UDP-N-acetyl-alpha-D-glucosamine. Residue N227 coordinates Mg(2+). Residues 230 to 250 (VALATAEDVMRRRINKAHMIN) form a linker region. The N-acetyltransferase stretch occupies residues 251 to 460 (GVTFQNPNAT…KKPHHPSQQK (210 aa)). Residues R332 and K350 each coordinate UDP-N-acetyl-alpha-D-glucosamine. H362 (proton acceptor) is an active-site residue. Residues Y365 and N376 each contribute to the UDP-N-acetyl-alpha-D-glucosamine site. Residues A379, 385 to 386 (NY), S404, A422, and R439 each bind acetyl-CoA.

The protein in the N-terminal section; belongs to the N-acetylglucosamine-1-phosphate uridyltransferase family. This sequence in the C-terminal section; belongs to the transferase hexapeptide repeat family. As to quaternary structure, homotrimer. The cofactor is Mg(2+).

The protein localises to the cytoplasm. It carries out the reaction alpha-D-glucosamine 1-phosphate + acetyl-CoA = N-acetyl-alpha-D-glucosamine 1-phosphate + CoA + H(+). The catalysed reaction is N-acetyl-alpha-D-glucosamine 1-phosphate + UTP + H(+) = UDP-N-acetyl-alpha-D-glucosamine + diphosphate. The protein operates within nucleotide-sugar biosynthesis; UDP-N-acetyl-alpha-D-glucosamine biosynthesis; N-acetyl-alpha-D-glucosamine 1-phosphate from alpha-D-glucosamine 6-phosphate (route II): step 2/2. Its pathway is nucleotide-sugar biosynthesis; UDP-N-acetyl-alpha-D-glucosamine biosynthesis; UDP-N-acetyl-alpha-D-glucosamine from N-acetyl-alpha-D-glucosamine 1-phosphate: step 1/1. It functions in the pathway bacterial outer membrane biogenesis; LPS lipid A biosynthesis. Functionally, catalyzes the last two sequential reactions in the de novo biosynthetic pathway for UDP-N-acetylglucosamine (UDP-GlcNAc). The C-terminal domain catalyzes the transfer of acetyl group from acetyl coenzyme A to glucosamine-1-phosphate (GlcN-1-P) to produce N-acetylglucosamine-1-phosphate (GlcNAc-1-P), which is converted into UDP-GlcNAc by the transfer of uridine 5-monophosphate (from uridine 5-triphosphate), a reaction catalyzed by the N-terminal domain. The sequence is that of Bifunctional protein GlmU from Streptococcus thermophilus (strain CNRZ 1066).